A 337-amino-acid chain; its full sequence is tRNA N6-adenosine threonylcarbamoyltransferase (337 aa).

Residues His-111 and His-115 each contribute to the Fe cation site. Residues 134 to 138, Asp-167, Gly-180, and Asn-272 each bind substrate; that span reads LVSGG. Asp-300 serves as a coordination point for Fe cation.

The protein belongs to the KAE1 / TsaD family. Fe(2+) is required as a cofactor.

It is found in the cytoplasm. It carries out the reaction L-threonylcarbamoyladenylate + adenosine(37) in tRNA = N(6)-L-threonylcarbamoyladenosine(37) in tRNA + AMP + H(+). Required for the formation of a threonylcarbamoyl group on adenosine at position 37 (t(6)A37) in tRNAs that read codons beginning with adenine. Is involved in the transfer of the threonylcarbamoyl moiety of threonylcarbamoyl-AMP (TC-AMP) to the N6 group of A37, together with TsaE and TsaB. TsaD likely plays a direct catalytic role in this reaction. The sequence is that of tRNA N6-adenosine threonylcarbamoyltransferase from Salmonella schwarzengrund (strain CVM19633).